Consider the following 299-residue polypeptide: Protein bem46 (299 aa).

The chain crosses the membrane as a helical span at residues 15–32 (YSGMASLAVTLIALGFLY).

It belongs to the serine esterase family.

Its subcellular location is the membrane. Functionally, suppressor of bem1/bud5. The protein is Protein bem46 (bem46) of Schizosaccharomyces pombe (strain 972 / ATCC 24843) (Fission yeast).